Consider the following 129-residue polypeptide: Glycine cleavage system H protein (129 aa).

One can recognise a Lipoyl-binding domain in the interval 24–106; that stretch reads SVVVGVTQHA…YGAGWIVEIE (83 aa). N6-lipoyllysine is present on lysine 65.

This sequence belongs to the GcvH family. The glycine cleavage system is composed of four proteins: P, T, L and H. (R)-lipoate serves as cofactor.

Its function is as follows. The glycine cleavage system catalyzes the degradation of glycine. The H protein shuttles the methylamine group of glycine from the P protein to the T protein. This chain is Glycine cleavage system H protein, found in Myxococcus xanthus (strain DK1622).